The primary structure comprises 437 residues: tRNA modification GTPase MnmE (437 aa).

(6S)-5-formyl-5,6,7,8-tetrahydrofolate is bound by residues Arg21, Glu80, and Arg120. Residues 218–361 (GFVVVLAGPP…LLDRVAAAAG (144 aa)) enclose the TrmE-type G domain. Asn228 is a K(+) binding site. Residues 228–233 (NAGKST), 247–253 (SPIPGTT), and 272–275 (DTAG) contribute to the GTP site. Residue Ser232 coordinates Mg(2+). Residues Ser247, Ile249, and Thr252 each contribute to the K(+) site. Thr253 contributes to the Mg(2+) binding site. (6S)-5-formyl-5,6,7,8-tetrahydrofolate is bound at residue Lys437.

Belongs to the TRAFAC class TrmE-Era-EngA-EngB-Septin-like GTPase superfamily. TrmE GTPase family. As to quaternary structure, homodimer. Heterotetramer of two MnmE and two MnmG subunits. It depends on K(+) as a cofactor.

It is found in the cytoplasm. Exhibits a very high intrinsic GTPase hydrolysis rate. Involved in the addition of a carboxymethylaminomethyl (cmnm) group at the wobble position (U34) of certain tRNAs, forming tRNA-cmnm(5)s(2)U34. This is tRNA modification GTPase MnmE from Methylobacterium sp. (strain 4-46).